A 114-amino-acid chain; its full sequence is Flagellar hook-basal body complex protein FliE (114 aa).

The protein belongs to the FliE family.

The protein localises to the bacterial flagellum basal body. In Burkholderia lata (strain ATCC 17760 / DSM 23089 / LMG 22485 / NCIMB 9086 / R18194 / 383), this protein is Flagellar hook-basal body complex protein FliE.